We begin with the raw amino-acid sequence, 1063 residues long: Retinoblastoma-like protein 1 (1063 aa).

3 positions are modified to phosphothreonine: Thr-332, Thr-369, and Thr-385. The segment at 383–584 (VTTPVASATQ…WEALHASANR (202 aa)) is domain A. The tract at residues 383 to 944 (VTTPVASATQ…GRVKSFALKY (562 aa)) is pocket; binds T and E1A. The tract at residues 585–779 (VPSCEEVIFP…AQDAHLTGVS (195 aa)) is spacer. A phosphoserine mark is found at Ser-640, Ser-650, Ser-748, and Ser-761. The interval 780 to 944 (KPKRTGSLAL…GRVKSFALKY (165 aa)) is domain B. Residues Ser-959, Ser-970, and Ser-983 each carry the phosphoserine modification. Phosphothreonine is present on Thr-992. A phosphoserine mark is found at Ser-1004 and Ser-1036.

It belongs to the retinoblastoma protein (RB) family. Component of the DREAM complex (also named LINC complex) at least composed of E2F4, E2F5, LIN9, LIN37, LIN52, LIN54, MYBL1, MYBL2, RBL1, RBL2, RBBP4, TFDP1 and TFDP2. The complex exists in quiescent cells where it represses cell cycle-dependent genes. It dissociates in S phase when LIN9, LIN37, LIN52 and LIN54 form a subcomplex that binds to MYBL2. Interacts with AATF. Interacts with KDM5A. Interacts with KMT5B and KMT5C. Interacts with USP4. Interacts with RBBP9. Post-translationally, cell-cycle arrest properties are inactivated by phosphorylation on Thr-332, Ser-640, Ser-959 and Ser-970 by CDK4. Highly expressed in fetal heart and liver. Expressed at low levels in all other fetal tissues except skeletal muscle. High levels in neonatal spleen and thymus with low levels in other tissues. In adult, highly expressed in testis. Barely detectable in other tissues.

The protein resides in the nucleus. Functionally, key regulator of entry into cell division. Directly involved in heterochromatin formation by maintaining overall chromatin structure and, in particular, that of constitutive heterochromatin by stabilizing histone methylation. Recruits and targets histone methyltransferases KMT5B and KMT5C, leading to epigenetic transcriptional repression. Controls histone H4 'Lys-20' trimethylation. Probably acts as a transcription repressor by recruiting chromatin-modifying enzymes to promoters. Potent inhibitor of E2F-mediated trans-activation. May act as a tumor suppressor. This is Retinoblastoma-like protein 1 (Rbl1) from Mus musculus (Mouse).